Here is a 149-residue protein sequence, read N- to C-terminus: D-aminoacyl-tRNA deacylase (149 aa).

The Gly-cisPro motif, important for rejection of L-amino acids signature appears at 137 to 138 (GP).

This sequence belongs to the DTD family. Homodimer.

The protein localises to the cytoplasm. It catalyses the reaction glycyl-tRNA(Ala) + H2O = tRNA(Ala) + glycine + H(+). It carries out the reaction a D-aminoacyl-tRNA + H2O = a tRNA + a D-alpha-amino acid + H(+). Its function is as follows. An aminoacyl-tRNA editing enzyme that deacylates mischarged D-aminoacyl-tRNAs. Also deacylates mischarged glycyl-tRNA(Ala), protecting cells against glycine mischarging by AlaRS. Acts via tRNA-based rather than protein-based catalysis; rejects L-amino acids rather than detecting D-amino acids in the active site. By recycling D-aminoacyl-tRNA to D-amino acids and free tRNA molecules, this enzyme counteracts the toxicity associated with the formation of D-aminoacyl-tRNA entities in vivo and helps enforce protein L-homochirality. The polypeptide is D-aminoacyl-tRNA deacylase (Desulfitobacterium hafniense (strain DSM 10664 / DCB-2)).